The primary structure comprises 223 residues: Small ribosomal subunit protein uS3 (223 aa).

Positions 39-107 (VREFLHKKLA…PVQINIEEVR (69 aa)) constitute a KH type-2 domain.

It belongs to the universal ribosomal protein uS3 family. Part of the 30S ribosomal subunit. Forms a tight complex with proteins S10 and S14.

Functionally, binds the lower part of the 30S subunit head. Binds mRNA in the 70S ribosome, positioning it for translation. This Francisella tularensis subsp. mediasiatica (strain FSC147) protein is Small ribosomal subunit protein uS3.